We begin with the raw amino-acid sequence, 946 residues long: Translation initiation factor IF-2 (946 aa).

Disordered stretches follow at residues 58-250 (AERK…AVVI) and 301-324 (VSRDKRRGRQPGRPISEEQAKSLS). Composition is skewed to low complexity over residues 102 to 165 (EPPQ…QPAA) and 174 to 185 (AQPSAPQPAAAQ). Residues 186–211 (PRPPQPPMPSRPPPAGYRPAPPPGAR) are compositionally biased toward pro residues. Over residues 212–229 (PPMSAAPGAPAQPGAAAQ) the composition is skewed to low complexity. One can recognise a tr-type G domain in the interval 445–614 (IRPPVVTVMG…ALQSEVLELK (170 aa)). The tract at residues 454–461 (GHVDHGKT) is G1. Residue 454 to 461 (GHVDHGKT) participates in GTP binding. Positions 479–483 (GITQH) are G2. The G3 stretch occupies residues 500–503 (DTPG). GTP-binding positions include 500 to 504 (DTPGH) and 554 to 557 (NKVD). Residues 554–557 (NKVD) are G4. Residues 590–592 (SAR) are G5.

It belongs to the TRAFAC class translation factor GTPase superfamily. Classic translation factor GTPase family. IF-2 subfamily.

The protein localises to the cytoplasm. Functionally, one of the essential components for the initiation of protein synthesis. Protects formylmethionyl-tRNA from spontaneous hydrolysis and promotes its binding to the 30S ribosomal subunits. Also involved in the hydrolysis of GTP during the formation of the 70S ribosomal complex. The chain is Translation initiation factor IF-2 from Anaeromyxobacter sp. (strain K).